Consider the following 421-residue polypeptide: MDKLKKYTPDGMRDILFKECEEKLYVEKKLRNLYKLNGFSEIISPTLEFYDVFNFENQPIAQEKMYKLFDRNGRILVLKPDMTMPIGRIVATKVNYKDYPLKLCYTSNIFRINENLNGKTSEITQSGIEIIGIENIKADAEVVITAIESLLQLGLKNFKIELGQSKFFKEIIKNENINKEEVFTLKNLIENKNYVALKDYLKEKTKIIKADTIKILEQLPRMFGDIGVVYEAKNLVNDNEQLKALDEILSLYKIIDKVGLSKYVSIDLGMIQDIDYYTGVIFKGYVEGVGDYILSGGRYDKLIGNFGCDLPSTGFGINIDNIIEALRIYEVLNIRKFRNVILHCENKYLNRAYKIANRVRKNNIICEISLRDTIEDTIKYARSKCVDKIIFIDNREFIKIYDINFNKSKEVIIDNFLEELI.

This sequence belongs to the class-II aminoacyl-tRNA synthetase family. HisZ subfamily. In terms of assembly, heteromultimer composed of HisG and HisZ subunits.

Its subcellular location is the cytoplasm. Its pathway is amino-acid biosynthesis; L-histidine biosynthesis; L-histidine from 5-phospho-alpha-D-ribose 1-diphosphate: step 1/9. In terms of biological role, required for the first step of histidine biosynthesis. May allow the feedback regulation of ATP phosphoribosyltransferase activity by histidine. The sequence is that of ATP phosphoribosyltransferase regulatory subunit from Clostridium novyi (strain NT).